We begin with the raw amino-acid sequence, 448 residues long: Histidine--tRNA ligase (448 aa).

Belongs to the class-II aminoacyl-tRNA synthetase family. Homodimer.

The protein localises to the cytoplasm. It catalyses the reaction tRNA(His) + L-histidine + ATP = L-histidyl-tRNA(His) + AMP + diphosphate + H(+). This is Histidine--tRNA ligase from Treponema denticola (strain ATCC 35405 / DSM 14222 / CIP 103919 / JCM 8153 / KCTC 15104).